Consider the following 314-residue polypeptide: Glycine--tRNA ligase alpha subunit (314 aa).

It belongs to the class-II aminoacyl-tRNA synthetase family. As to quaternary structure, tetramer of two alpha and two beta subunits.

The protein resides in the cytoplasm. The catalysed reaction is tRNA(Gly) + glycine + ATP = glycyl-tRNA(Gly) + AMP + diphosphate. The polypeptide is Glycine--tRNA ligase alpha subunit (Leuconostoc citreum (strain KM20)).